The following is a 143-amino-acid chain: Large ribosomal subunit protein uL11 (143 aa).

The protein belongs to the universal ribosomal protein uL11 family. In terms of assembly, part of the ribosomal stalk of the 50S ribosomal subunit. Interacts with L10 and the large rRNA to form the base of the stalk. L10 forms an elongated spine to which L12 dimers bind in a sequential fashion forming a multimeric L10(L12)X complex. Post-translationally, one or more lysine residues are methylated.

Forms part of the ribosomal stalk which helps the ribosome interact with GTP-bound translation factors. This is Large ribosomal subunit protein uL11 from Pseudomonas savastanoi pv. phaseolicola (strain 1448A / Race 6) (Pseudomonas syringae pv. phaseolicola (strain 1448A / Race 6)).